The primary structure comprises 779 residues: Angiomotin-like protein 2 (779 aa).

Disordered stretches follow at residues 41–215 (GGAG…QYPH) and 263–308 (QYLQ…TSGS). Composition is skewed to basic and acidic residues over residues 100 to 112 (KGEELPTYEEAKA) and 141 to 152 (RRQDEALRELRH). Residues 101–307 (GEELPTYEEA…SAQASSATSG (207 aa)) are required for interaction with CDH5. Phosphotyrosine; by FGFR1 is present on Tyr-107. The span at 160 to 169 (ERLLQLSLER) shows a compositional bias: low complexity. Residues 177 to 193 (HMSSSHSFPQLARNQQG) show a composition bias toward polar residues. Positions 196-213 (LRGPPAEGPESRGPPPQY) are enriched in pro residues. The tract at residues 220–307 (HETTTAVTDP…SAQASSATSG (88 aa)) is required for interaction with CDH1. The span at 298–308 (SAQASSATSGS) shows a compositional bias: low complexity. Positions 308 to 581 (SAHLAQMEAV…KYLEERAMRQ (274 aa)) form a coiled coil. Glycyl lysine isopeptide (Lys-Gly) (interchain with G-Cter in ubiquitin) cross-links involve residues Lys-347 and Lys-408. Disordered stretches follow at residues 522–543 (RAQQRQAGAPGGSSGSGGSPEL) and 679–753 (TQGW…GCSS). The segment covering 530-539 (APGGSSGSGG) has biased composition (gly residues). Composition is skewed to polar residues over residues 680-690 (QGWQGLSSSER) and 725-740 (DGSTQTEGPPDSTSTC). A phosphoserine mark is found at Ser-759 and Ser-762. The PDZ-binding motif lies at 776–779 (EILI).

It belongs to the angiomotin family. Part of a complex composed of AMOTL2, MAGI1 and CDH5, within the complex AMOTL2 acts as a scaffold protein for the interaction of MAGI1 with CDH5. The complex is required for coupling actin fibers to cell junctions in endothelial cells. Within the complex AMOTL2 (via its N-terminus) interacts with CDH5. Interacts (via N-terminus) with MAGI1. Interacts (via N-terminus) with ACTB; the interaction facilitates binding of cell junction complexes to actin fibers in endothelial cells. Interacts with CDH1; the interaction may facilitate binding of radial actin fibers to cell junction complexes. Interacts with SRC. Interacts with YAP1; the interaction is required for ubiquitination of AMOTL2 and localization of YAP1 to tight junctions. Interacts with WWP1; the interaction facilitates WWP1 interaction with the Crumbs complex and subsequent WWP1 translocation to the plasma membrane. WWP1 interaction with the Crumbs complex promotes WWP1 monoubiquitination of AMOTL2 which subsequently activates the Hippo signaling pathway. When ubiquitinated interacts with LATS2 (via UBA domain); the interaction promotes LATS2 phosphorylation of YAP1. Interacts (via PPXY motif) with WWTR1/TAZ (via WW domain); the interaction promotes WWTR1/TAZ localization to the cytoplasm and thereby inhibition of its transcriptional properties. Interacts with PHLDB2; interaction may facilitate PHLDB2 localization to the myotube podosome cortex that surrounds the core. Monoubiquitinated at Lys-347 and Lys-408 by Crumbs complex-bound WWP1. De-ubiquitinated at Lys-347 and Lys-408 by USP9X; the interaction may be promoted by cell contact inhibition. Deubiquitination of AMOTL2 negatively regulates Hippo signaling activation. In terms of processing, phosphorylation at Tyr-107 is necessary for efficient binding to SRC and synergistically functioning with SRC to activate the downstream MAPK pathway.

The protein resides in the recycling endosome. It localises to the cytoplasm. It is found in the cell projection. Its subcellular location is the podosome. The protein localises to the cell junction. Functionally, regulates the translocation of phosphorylated SRC to peripheral cell-matrix adhesion sites. Required for proper architecture of actin filaments. Plays a role in coupling actin fibers to cell junctions in endothelial cells and is therefore required for correct endothelial cell morphology via facilitating transcellular transmission of mechanical force resulting in endothelial cell elongation. Required for the anchoring of radial actin fibers to CDH1 junction complexes at the cell membrane which facilitates organization of radial actin fiber structure and cellular response to contractile forces. This contributes to maintenance of cell area, size, shape, epithelial sheet organization and trophectoderm cell properties that facilitate blastocyst zona hatching. Inhibits the Wnt/beta-catenin signaling pathway, probably by recruiting CTNNB1 to recycling endosomes and hence preventing its translocation to the nucleus. Participates in angiogenesis. Activates the Hippo signaling pathway in response to cell contact inhibition via interaction with and ubiquitination by Crumbs complex-bound WWP1. Ubiquitinated AMOTL2 then interacts with LATS2 which in turn phosphorylates YAP1, excluding it from the nucleus and localizing it to the cytoplasm and tight junctions, therefore ultimately repressing YAP1-driven transcription of target genes. Acts to inhibit WWTR1/TAZ transcriptional coactivator activity via sequestering WWTR1/TAZ in the cytoplasm and at tight junctions. Regulates the size and protein composition of the podosome cortex and core at myofibril neuromuscular junctions. Selectively promotes FGF-induced MAPK activation through SRC. May play a role in the polarity, proliferation and migration of endothelial cells. The polypeptide is Angiomotin-like protein 2 (Homo sapiens (Human)).